We begin with the raw amino-acid sequence, 850 residues long: DNA polymerase I (850 aa).

The region spanning 1-288 (MKLVIFDGNS…SIIKRLGLSE (288 aa)) is the 5'-3' exonuclease domain. A polymerase region spans residues 470 to 850 (VDRDALIQYT…KEGLNWYETK (381 aa)).

Belongs to the DNA polymerase type-A family.

It catalyses the reaction DNA(n) + a 2'-deoxyribonucleoside 5'-triphosphate = DNA(n+1) + diphosphate. Functionally, in addition to polymerase activity, this DNA polymerase exhibits 3'-5' and 5'-3' exonuclease activity. The protein is DNA polymerase I (polA) of Caldicellulosiruptor bescii (strain ATCC BAA-1888 / DSM 6725 / KCTC 15123 / Z-1320) (Anaerocellum thermophilum).